We begin with the raw amino-acid sequence, 425 residues long: UDP-N-acetylglucosamine 1-carboxyvinyltransferase (425 aa).

22–23 (KN) is a binding site for phosphoenolpyruvate. Arg93 contacts UDP-N-acetyl-alpha-D-glucosamine. The Proton donor role is filled by Cys117. 2-(S-cysteinyl)pyruvic acid O-phosphothioketal is present on Cys117. UDP-N-acetyl-alpha-D-glucosamine contacts are provided by residues 122–126 (RPIDL), Asp307, and Val329.

Belongs to the EPSP synthase family. MurA subfamily.

The protein resides in the cytoplasm. It catalyses the reaction phosphoenolpyruvate + UDP-N-acetyl-alpha-D-glucosamine = UDP-N-acetyl-3-O-(1-carboxyvinyl)-alpha-D-glucosamine + phosphate. It functions in the pathway cell wall biogenesis; peptidoglycan biosynthesis. Functionally, cell wall formation. Adds enolpyruvyl to UDP-N-acetylglucosamine. The protein is UDP-N-acetylglucosamine 1-carboxyvinyltransferase of Prosthecochloris aestuarii (strain DSM 271 / SK 413).